We begin with the raw amino-acid sequence, 238 residues long: Small ribosomal subunit protein uS2 (238 aa).

The protein belongs to the universal ribosomal protein uS2 family.

The chain is Small ribosomal subunit protein uS2 from Chloroflexus aurantiacus (strain ATCC 29366 / DSM 635 / J-10-fl).